We begin with the raw amino-acid sequence, 1070 residues long: DNA-directed RNA polymerase subunit beta (1070 aa).

This sequence belongs to the RNA polymerase beta chain family. In plastids the minimal PEP RNA polymerase catalytic core is composed of four subunits: alpha, beta, beta', and beta''. When a (nuclear-encoded) sigma factor is associated with the core the holoenzyme is formed, which can initiate transcription.

The protein localises to the plastid. It is found in the chloroplast. The catalysed reaction is RNA(n) + a ribonucleoside 5'-triphosphate = RNA(n+1) + diphosphate. Functionally, DNA-dependent RNA polymerase catalyzes the transcription of DNA into RNA using the four ribonucleoside triphosphates as substrates. The polypeptide is DNA-directed RNA polymerase subunit beta (Vitis vinifera (Grape)).